We begin with the raw amino-acid sequence, 508 residues long: MLO-like protein 3 (508 aa).

At 1 to 21 (MTDKEESNHSSEVGAVRSLQE) the chain is on the extracellular side. The chain crosses the membrane as a helical span at residues 22–42 (TPTWALATVCFFFIAVSICLE). Residues 43–68 (RLINLLSTRLKKNRKTSLLEAVEKLK) are Cytoplasmic-facing. The chain crosses the membrane as a helical span at residues 69–89 (SVLMVLGFMSLMLNVTEGEVS). The Extracellular segment spans residues 90-153 (KICIPIKYAN…SEEGLTQLSY (64 aa)). The chain crosses the membrane as a helical span at residues 154–174 (FFFVLACMHILCNLAILLLGM). Over 175 to 275 (AKMRKWNSWE…IQRSLHEDFK (101 aa)) the chain is Cytoplasmic. Residues 276–296 (TVVGISPLMWLTVVIFMLLDV) form a helical membrane-spanning segment. The Extracellular segment spans residues 297-304 (SGWRVYFY). A helical transmembrane segment spans residues 305–325 (MSFVPLIIVLVIGTKLEMIVA). Topologically, residues 326 to 357 (KMAVTIKENNSVIRGTPLVESNDTHFWFSNPR) are cytoplasmic. The chain crosses the membrane as a helical span at residues 358–378 (FLLSILHYTLFLNTFEMAFIV). Over 379-401 (WITWQFGINSCYHDNQGIIITRL) the chain is Extracellular. A helical transmembrane segment spans residues 402-422 (VLAVTVQFLSSYITLPLYAIV). At 423-508 (TQMGSSYKRA…EIQIQEKTER (86 aa)) the chain is on the cytoplasmic side. Residues 436 to 457 (EQLANVLRHWQGMVRDKKKTIQ) are calmodulin-binding. Residues 453-492 (KKTIQTPDTDNNSNNNNGDIDSGESPVQTEVASEFRFSGR) are disordered. Residue S494 is modified to Phosphoserine.

The protein belongs to the MLO family.

The protein localises to the membrane. Functionally, may be involved in modulation of pathogen defense and leaf cell death. Activity seems to be regulated by Ca(2+)-dependent calmodulin binding and seems not to require heterotrimeric G proteins. The chain is MLO-like protein 3 (MLO3) from Arabidopsis thaliana (Mouse-ear cress).